We begin with the raw amino-acid sequence, 555 residues long: Embryonic protein DC-8 (555 aa).

The segment covering 83–115 (RENTDYAYDKGREGGDVAAQKAEEAKEKAKMAK) has biased composition (basic and acidic residues). Disordered regions lie at residues 83–118 (RENT…KDTT) and 132–151 (KAEE…KEKA). Tandem repeats lie at residues 97–114 (GDVA…AKMA), 115–125 (KDTTMGKAGEY), 126–140 (KDYT…KEKA), 141–154 (AQKA…AGEY), 155–176 (KNYT…AGEY), 177–191 (KDYA…KDTT), 192–205 (AQKA…TGEY), 206–216 (KDYAAQKAAEA), 217–237 (KVLA…DGEY), 238–259 (KDYA…TGEY), 260–281 (KDYA…AKEY), 282–303 (KEYA…TGEY), 304–325 (KDYS…TKEY), 326–343 (KDYT…TMEK), 344–358 (AKEA…TGEY), 359–376 (KDYA…TVEK), and 377–391 (AKEG…MTEL). The interval 97–391 (GDVAAQKAEE…DTTVGKMTEL (295 aa)) is 17 X approximate tandem repeats. The tract at residues 184–204 (AAEAKDTTAQKAAEAKEKTGE) is disordered. The span at 444–465 (LQEEGVKDEAKQRAEADRETAG) shows a compositional bias: basic and acidic residues. The interval 444 to 472 (LQEEGVKDEAKQRAEADRETAGDRGSAAK) is disordered.

It belongs to the LEA type 4 family.

The protein resides in the cytoplasm. It is found in the secreted. The protein localises to the cell wall. Functionally, may play a role in late embryogeny. This is Embryonic protein DC-8 from Daucus carota (Wild carrot).